The sequence spans 227 residues: Cytochrome c oxidase subunit 2 (227 aa).

Topologically, residues 1–14 (MAYPMQLGLQDATS) are mitochondrial intermembrane. The helical transmembrane segment at 15–45 (PIMEELTDFHDHTLMIVFLISTLVLYIISMM) threads the bilayer. At 46-59 (LTTKLTHTSTMDAQ) the chain is on the mitochondrial matrix side. A helical transmembrane segment spans residues 60 to 87 (EVETIWTVLPAVILVMIALPSLRILYMM). Residues 88-227 (DEINDPYLTV…QFESWASSMT (140 aa)) are Mitochondrial intermembrane-facing. Cu cation-binding residues include H161, C196, E198, C200, H204, and M207. E198 is a Mg(2+) binding site.

It belongs to the cytochrome c oxidase subunit 2 family. Component of the cytochrome c oxidase (complex IV, CIV), a multisubunit enzyme composed of 14 subunits. The complex is composed of a catalytic core of 3 subunits MT-CO1, MT-CO2 and MT-CO3, encoded in the mitochondrial DNA, and 11 supernumerary subunits COX4I, COX5A, COX5B, COX6A, COX6B, COX6C, COX7A, COX7B, COX7C, COX8 and NDUFA4, which are encoded in the nuclear genome. The complex exists as a monomer or a dimer and forms supercomplexes (SCs) in the inner mitochondrial membrane with NADH-ubiquinone oxidoreductase (complex I, CI) and ubiquinol-cytochrome c oxidoreductase (cytochrome b-c1 complex, complex III, CIII), resulting in different assemblies (supercomplex SCI(1)III(2)IV(1) and megacomplex MCI(2)III(2)IV(2)). Found in a complex with TMEM177, COA6, COX18, COX20, SCO1 and SCO2. Interacts with TMEM177 in a COX20-dependent manner. Interacts with COX20. Interacts with COX16. Requires Cu cation as cofactor.

It is found in the mitochondrion inner membrane. The catalysed reaction is 4 Fe(II)-[cytochrome c] + O2 + 8 H(+)(in) = 4 Fe(III)-[cytochrome c] + 2 H2O + 4 H(+)(out). Its function is as follows. Component of the cytochrome c oxidase, the last enzyme in the mitochondrial electron transport chain which drives oxidative phosphorylation. The respiratory chain contains 3 multisubunit complexes succinate dehydrogenase (complex II, CII), ubiquinol-cytochrome c oxidoreductase (cytochrome b-c1 complex, complex III, CIII) and cytochrome c oxidase (complex IV, CIV), that cooperate to transfer electrons derived from NADH and succinate to molecular oxygen, creating an electrochemical gradient over the inner membrane that drives transmembrane transport and the ATP synthase. Cytochrome c oxidase is the component of the respiratory chain that catalyzes the reduction of oxygen to water. Electrons originating from reduced cytochrome c in the intermembrane space (IMS) are transferred via the dinuclear copper A center (CU(A)) of subunit 2 and heme A of subunit 1 to the active site in subunit 1, a binuclear center (BNC) formed by heme A3 and copper B (CU(B)). The BNC reduces molecular oxygen to 2 water molecules using 4 electrons from cytochrome c in the IMS and 4 protons from the mitochondrial matrix. The protein is Cytochrome c oxidase subunit 2 (MT-CO2) of Cratogeomys bursarius (Plains pocket gopher).